The sequence spans 149 residues: Large ribosomal subunit protein uL13 (149 aa).

It belongs to the universal ribosomal protein uL13 family. In terms of assembly, part of the 50S ribosomal subunit.

In terms of biological role, this protein is one of the early assembly proteins of the 50S ribosomal subunit, although it is not seen to bind rRNA by itself. It is important during the early stages of 50S assembly. The protein is Large ribosomal subunit protein uL13 of Saccharolobus solfataricus (strain ATCC 35092 / DSM 1617 / JCM 11322 / P2) (Sulfolobus solfataricus).